The primary structure comprises 103 residues: Large ribosomal subunit protein bL21 (103 aa).

Belongs to the bacterial ribosomal protein bL21 family. In terms of assembly, part of the 50S ribosomal subunit. Contacts protein L20.

This protein binds to 23S rRNA in the presence of protein L20. The protein is Large ribosomal subunit protein bL21 of Shewanella pealeana (strain ATCC 700345 / ANG-SQ1).